We begin with the raw amino-acid sequence, 326 residues long: GTP 3',8-cyclase (326 aa).

Residues 5–227 enclose the Radical SAM core domain; sequence GHGRTVDYLR…ALGREGASPS (223 aa). Arg-14 lines the GTP pocket. Residues Cys-21 and Cys-25 each coordinate [4Fe-4S] cluster. Tyr-27 lines the S-adenosyl-L-methionine pocket. Cys-28 provides a ligand contact to [4Fe-4S] cluster. Arg-64 lines the GTP pocket. Gly-68 is a binding site for S-adenosyl-L-methionine. Residue Thr-95 coordinates GTP. Ser-119 provides a ligand contact to S-adenosyl-L-methionine. Lys-155 contacts GTP. An S-adenosyl-L-methionine-binding site is contributed by Met-189. Residues Cys-250 and Cys-253 each coordinate [4Fe-4S] cluster. A GTP-binding site is contributed by 255–257; it reads RIR. Cys-267 contacts [4Fe-4S] cluster.

The protein belongs to the radical SAM superfamily. MoaA family. Monomer and homodimer. It depends on [4Fe-4S] cluster as a cofactor.

The enzyme catalyses GTP + AH2 + S-adenosyl-L-methionine = (8S)-3',8-cyclo-7,8-dihydroguanosine 5'-triphosphate + 5'-deoxyadenosine + L-methionine + A + H(+). It participates in cofactor biosynthesis; molybdopterin biosynthesis. Functionally, catalyzes the cyclization of GTP to (8S)-3',8-cyclo-7,8-dihydroguanosine 5'-triphosphate. The sequence is that of GTP 3',8-cyclase from Sulfurovum sp. (strain NBC37-1).